The primary structure comprises 351 residues: Lipoyl synthase (351 aa).

The segment covering 1–10 has biased composition (polar residues); the sequence is MNDSGNSSKV. Positions 1–27 are disordered; that stretch reads MNDSGNSSKVNVRPPSAGLGAPSPGKR. Residues 14–24 show a composition bias toward low complexity; it reads PPSAGLGAPSP. Cys-74, Cys-79, Cys-85, Cys-100, Cys-104, Cys-107, and Ser-311 together coordinate [4Fe-4S] cluster. The Radical SAM core domain occupies 86-300; sequence WEDREATFLI…KEQAKEIGFS (215 aa).

This sequence belongs to the radical SAM superfamily. Lipoyl synthase family. [4Fe-4S] cluster is required as a cofactor.

The protein resides in the cytoplasm. The enzyme catalyses [[Fe-S] cluster scaffold protein carrying a second [4Fe-4S](2+) cluster] + N(6)-octanoyl-L-lysyl-[protein] + 2 oxidized [2Fe-2S]-[ferredoxin] + 2 S-adenosyl-L-methionine + 4 H(+) = [[Fe-S] cluster scaffold protein] + N(6)-[(R)-dihydrolipoyl]-L-lysyl-[protein] + 4 Fe(3+) + 2 hydrogen sulfide + 2 5'-deoxyadenosine + 2 L-methionine + 2 reduced [2Fe-2S]-[ferredoxin]. Its pathway is protein modification; protein lipoylation via endogenous pathway; protein N(6)-(lipoyl)lysine from octanoyl-[acyl-carrier-protein]: step 2/2. Its function is as follows. Catalyzes the radical-mediated insertion of two sulfur atoms into the C-6 and C-8 positions of the octanoyl moiety bound to the lipoyl domains of lipoate-dependent enzymes, thereby converting the octanoylated domains into lipoylated derivatives. The polypeptide is Lipoyl synthase (Tropheryma whipplei (strain TW08/27) (Whipple's bacillus)).